The primary structure comprises 407 residues: MMEKHYVGSEIGQLRSVMLHRPNLSLKRLTPSNCQELLFDDVLSVERAGEEHDIFANTLRQQGIEVLLLTDLLTQTLDIPEAKSWLLETQISDYRLGPTFATDVRTWLAEMSHRDLARHLSGGLTYSEIPASIKNMVVDTHDINDFIMKPLPNHLFTRDTSCWIYNGVSINPMAKPARQRETNNLRAIYRWHPQFAGGEFIKYFGDENINYDHATLEGGDVLVIGRGAVLIGMSERTTPQGVEFLAQALFKHRQAERVIAVELPKHRSCMHLDTVMTHIDIDTFSVYPEVVRPDVNCWTLTPDGHGGLKRTQESTLLHAIEKALGIDQVRLITTGGDAFEAEREQWNDANNVLTLRPGVVVGYERNIWTNEKYDKAGITVLPIPGDELGRGRGGARCMSCPLHRDGI.

Residue C397 is the Amidino-cysteine intermediate of the active site.

It belongs to the arginine deiminase family.

It localises to the cytoplasm. The enzyme catalyses L-arginine + H2O = L-citrulline + NH4(+). The protein operates within amino-acid degradation; L-arginine degradation via ADI pathway; carbamoyl phosphate from L-arginine: step 1/2. This is Arginine deiminase from Escherichia coli O81 (strain ED1a).